Consider the following 227-residue polypeptide: Uridylate kinase (227 aa).

6–10 (KVSGK) is a binding site for ATP. G43 contributes to the UMP binding site. Positions 44 and 48 each coordinate ATP. Residues D65 and 113-119 (FQPGQST) each bind UMP. 4 residues coordinate ATP: T139, N140, Y145, and D148.

Belongs to the UMP kinase family. As to quaternary structure, homohexamer.

The protein localises to the cytoplasm. It carries out the reaction UMP + ATP = UDP + ADP. The protein operates within pyrimidine metabolism; CTP biosynthesis via de novo pathway; UDP from UMP (UMPK route): step 1/1. Inhibited by UTP. Its function is as follows. Catalyzes the reversible phosphorylation of UMP to UDP. The sequence is that of Uridylate kinase from Sulfolobus acidocaldarius (strain ATCC 33909 / DSM 639 / JCM 8929 / NBRC 15157 / NCIMB 11770).